The primary structure comprises 153 residues: Large ribosomal subunit protein uL15 (153 aa).

The segment at 21–41 (RGIGSGKGKTGGRGIKGQKSR) is disordered. Residues 23-35 (IGSGKGKTGGRGI) show a composition bias toward gly residues.

The protein belongs to the universal ribosomal protein uL15 family. As to quaternary structure, part of the 50S ribosomal subunit.

Its function is as follows. Binds to the 23S rRNA. The chain is Large ribosomal subunit protein uL15 from Rickettsia rickettsii (strain Iowa).